The chain runs to 270 residues: MNNTIISMKEKELRFLKFFHQQKYNVVDFNLIEELDWRRLTHEDLQQMDERSFWQQNKSIYALRNDFTDQLFRYYSNYPTHLKKVAYAGDIIRDNRVIKQVGIENYEPQFDNITQNFLDFQYFIQNVLHDDIQFVILGHYQLIDALLEKNHQTREVMEMIEERNLSGLIQKLTFNHPIIQILKENTLNQLKILSHYLPERHPAMVAIQSWAQWFTDHGITEIHLDVTAQAPRSYYKGIFIKCHLKNTTHSVLTGGYYHGSLEGFGLGLTL.

Belongs to the class-II aminoacyl-tRNA synthetase family. HisZ subfamily. Heteromultimer composed of HisG and HisZ subunits.

The protein resides in the cytoplasm. It participates in amino-acid biosynthesis; L-histidine biosynthesis; L-histidine from 5-phospho-alpha-D-ribose 1-diphosphate: step 1/9. Required for the first step of histidine biosynthesis. May allow the feedback regulation of ATP phosphoribosyltransferase activity by histidine. The polypeptide is ATP phosphoribosyltransferase regulatory subunit (hisZ) (Staphylococcus epidermidis (strain ATCC 12228 / FDA PCI 1200)).